Here is a 291-residue protein sequence, read N- to C-terminus: RPE-retinal G protein-coupled receptor (291 aa).

Residues 1-15 (MAESGTLPTGFGELE) are Extracellular-facing. A helical membrane pass occupies residues 16 to 36 (VLAVGTVLLVEALSGLSLNIL). Residues 37-52 (TILSFCKTPELRTPSH) are Cytoplasmic-facing. The helical transmembrane segment at 53–73 (LLVLSLALADSGISLNALVAA) threads the bilayer. At 74 to 91 (TSSLLRRWPYGSEGCQAH) the chain is on the extracellular side. An intrachain disulfide couples cysteine 88 to cysteine 162. The helical transmembrane segment at 92 to 112 (GFQGFVTALASICSSAAVAWG) threads the bilayer. The Cytoplasmic segment spans residues 113 to 130 (RYHHFCTRSRLDWNTAVS). The chain crosses the membrane as a helical span at residues 131–151 (LVFFVWLSSAFWAALPLLGWG). The Extracellular portion of the chain corresponds to 152 to 175 (HYDYEPLGTCCTLDYSRGDRNFTS). N-linked (GlcNAc...) asparagine glycosylation occurs at asparagine 172. Residues 176–196 (FLFTMAFFNFLLPLFITVVSY) form a helical membrane-spanning segment. The Cytoplasmic segment spans residues 197–219 (RLMEQKLGKTSRPPVNTVLPART). The chain crosses the membrane as a helical span at residues 220-240 (LLLGWGPYALLYLYATIADAT). Topologically, residues 241-247 (SISPKLQ) are extracellular. The helical transmembrane segment at 248 to 268 (MVPALIAKAVPTVNAMNYALG) threads the bilayer. Lysine 255 is subject to N6-(retinylidene)lysine. Residues 269-291 (SEMVHRGIWQCLSPQRREHSREQ) are Cytoplasmic-facing.

This sequence belongs to the G-protein coupled receptor 1 family. Opsin subfamily. Post-translationally, covalently binds all-trans- and 11-cis-retinal. As to expression, preferentially expressed at high levels in the retinal pigment epithelium (RPE) and Mueller cells of the neural retina.

It localises to the membrane. In terms of biological role, receptor for all-trans- and 11-cis-retinal. Binds preferentially to the former and may catalyze the isomerization of the chromophore by a retinochrome-like mechanism. The polypeptide is RPE-retinal G protein-coupled receptor (RGR) (Bos taurus (Bovine)).